The chain runs to 130 residues: YopE regulator (130 aa).

In terms of biological role, positive regulator of YopE. In Yersinia enterocolitica serotype O:8 / biotype 1B (strain NCTC 13174 / 8081), this protein is YopE regulator (yerA).